The following is a 227-amino-acid chain: Small ribosomal subunit protein uS3 (227 aa).

A KH type-2 domain is found at 39–108 (IRKFIEERYK…EVIVNVDEVK (70 aa)).

Belongs to the universal ribosomal protein uS3 family. Part of the 30S ribosomal subunit. Forms a tight complex with proteins S10 and S14.

Functionally, binds the lower part of the 30S subunit head. Binds mRNA in the 70S ribosome, positioning it for translation. This Sulfurihydrogenibium sp. (strain YO3AOP1) protein is Small ribosomal subunit protein uS3.